The chain runs to 127 residues: Snaclec bothroinsularin subunit beta (127 aa).

3 disulfides stabilise this stretch: Cys-2/Cys-13, Cys-30/Cys-123, and Cys-100/Cys-115. A C-type lectin domain is found at Tyr-9–Glu-124.

This sequence belongs to the snaclec family. In terms of assembly, heterodimer of subunits alpha and beta; disulfide-linked. As to expression, expressed by the venom gland.

Its subcellular location is the secreted. In terms of biological role, thrombin and prothrombin (F2) inhibitor. The IC(50) of thrombin-induced platelet aggregation and fibrinocoagulation is 62 and 35 nM, respectively. Its inhibitory activity is at least 10-fold lower than that observed for other thrombin inhibitors. The protein is Snaclec bothroinsularin subunit beta of Bothrops insularis (Golden lancehead).